The primary structure comprises 499 residues: Cytochrome P450 81Q32 (499 aa).

Residues 5–25 form a helical membrane-spanning segment; it reads TLLYTFLAVVLLSISLKLFPV. Asn112, Asn183, and Asn266 each carry an N-linked (GlcNAc...) asparagine glycan. Cys434 is a heme binding site.

Belongs to the cytochrome P450 family. As to expression, expressed in leaf epidermis and in the leaf internal phloem-associated parenchyma (IPAP) inside the mesophyll.

It is found in the membrane. The polypeptide is Cytochrome P450 81Q32 (Catharanthus roseus (Madagascar periwinkle)).